We begin with the raw amino-acid sequence, 664 residues long: MISKIVLKSFFKTRWMRHDLNNESQETDRFSEKQTLDVFKGTDHPDLEKGVAAIGNVLKTLPLRPGVYRMYDSKGNILYVGKARALRNRVANYTQISGLSRRIQRMVSQTRSMTIVTTVTESEALLLEAQLIKRYRPPYNILLRDDKSFPYILLKEDGTFPQFPSLQRHRGVKRAKGKYYGPFASADSVTLTLNSLQKLFLLRSCSDSFFRNRKRPCLLYQIKRCSAPCVGRISEDDYRDLAVDTRDFLAGKSTHVQKKLVTAMEQASNDLNYELAAVYRDRLKALAFIQSHQSINSGNLRNADIFGIECRAGLACIQVFFIRNRQNWGHHAYYLNHIDEQPLEDVMQSFLGQFYEDKIAPKDILTNYLPSDKNVLEDALSSQRDYRVKFYQPQRGELKKLVDQAVRNAKEAIDRRLAEASTQKQLLKEMVNLFHLDKIPDRIEVYDNSHIMGSNMVGGMIVAGPEGFRRNSYRKFNIKSPSINPGDDFEMMREVLTRRFSRLERSDPDHSSSEWPDLLLIDGGKGQVHAVKDILAEQGISDIAIVGISKGPDRNAGREHFHLVDGSEYALPPNSGLLFYLQRLRDEAHRFAIGTHRAKRAKNLTSSPLDEVPGIGPSRKKALLLHFGTARDVKNASLSELEKVNGISSAIARQIYDFFHHSPA.

One can recognise a GIY-YIG domain in the interval 63–141; the sequence is LRPGVYRMYD…IKRYRPPYNI (79 aa). Residues 254 to 289 enclose the UVR domain; it reads THVQKKLVTAMEQASNDLNYELAAVYRDRLKALAFI.

The protein belongs to the UvrC family. Interacts with UvrB in an incision complex.

The protein localises to the cytoplasm. The UvrABC repair system catalyzes the recognition and processing of DNA lesions. UvrC both incises the 5' and 3' sides of the lesion. The N-terminal half is responsible for the 3' incision and the C-terminal half is responsible for the 5' incision. This is UvrABC system protein C from Zymomonas mobilis subsp. mobilis (strain ATCC 31821 / ZM4 / CP4).